A 331-amino-acid chain; its full sequence is Anthranilate phosphoribosyltransferase (331 aa).

5-phospho-alpha-D-ribose 1-diphosphate contacts are provided by residues Gly-79, 82 to 83, Thr-87, 89 to 92, 107 to 115, and Ala-119; these read GD, NIST, and KHGNYGATS. Gly-79 is a binding site for anthranilate. Ser-91 contacts Mg(2+). Asn-110 contributes to the anthranilate binding site. An anthranilate-binding site is contributed by Arg-165. Mg(2+)-binding residues include Asp-223 and Glu-224.

This sequence belongs to the anthranilate phosphoribosyltransferase family. Homodimer. It depends on Mg(2+) as a cofactor.

It carries out the reaction N-(5-phospho-beta-D-ribosyl)anthranilate + diphosphate = 5-phospho-alpha-D-ribose 1-diphosphate + anthranilate. Its pathway is amino-acid biosynthesis; L-tryptophan biosynthesis; L-tryptophan from chorismate: step 2/5. Catalyzes the transfer of the phosphoribosyl group of 5-phosphorylribose-1-pyrophosphate (PRPP) to anthranilate to yield N-(5'-phosphoribosyl)-anthranilate (PRA). The polypeptide is Anthranilate phosphoribosyltransferase (Bacteroides fragilis (strain YCH46)).